A 2224-amino-acid chain; its full sequence is MASTDCYLALEDGTVLPGYSFGYVPSENESKVGFGGEVVFQTGMVGYTEALTDRSYSGQILVLTYPLIGNYGVPAPDEDEHGLPLHFEWMKGVVQATALVVGEVAEEAFHWRKWKTLPDWLKQHKVPGIQDIDTRALTKKLREQGSMLGKIVYEKPPVEGLPKSSFVDPNVRNLAKECSVKERQVYGNPNGKGPRIAILDCGLKLNQLRCLLQRGASVTLLPWSARLEDEQFDALFLSNGPGNPESCDQIVQQVRKVIEEGQKPVFGICLGHQLLAKAIGCSTYKMKYGNRGHNLPCLHRATGRCLMTSQNHGYAVDLEQLPDGWSELFVNANDGTNEGIVHASKPYFSVQFHPEHHAGPQDTEFLFDVFMESIQQKDLTIPQLIEQRLRPTTPAIDSAPVMPRKVLILGSGGLSIGQAGEFDYSGSQAIKAMRESNIQTVLINPNIATVQTSKGMADKCYFLPLTPHYVEQVIKSERPNGVLLTFGGQTALNCGVQLERAGVFSKYNVRILGTPIQSIIETEDRKLFAERVNEIGEQVAPSEAVYSVAQALDAASRLGYPVMARAAFSLGGLGSGFANNEEELQSLAQQALAHSSQLIVDKSLKGWKEVEYEVVRDAYNNCITVCNMENFDPLGIHTGESIVVAPSQTLSDREYQMLRSTALKVIRHFGVVGECNIQYALCPHSEQYYIIEVNARLSRSSALASKATGYPLAYVAAKLALGLPLPDIKNSVTGNTTACFEPSLDYCVVKIPRWDLAKFVRVSKHIGSSMKSVGEVMAIGRNFEEAFQKALRMVDSDVLGFDPDVVPLNKEQLAEQLSEPTDRRPFVIAAALQLGMSLRELHQLTNIDYWFLEKLERIILLQSLLTRNGSRTDAALLLKAKRFGFSDKQIAKYIKSTELAVRHQRQEFGIRPHVKQIDTVAGEWPASTNYLYHTYNGSEHDVDFPGGHTIVVGSGVYRIGSSVEFDWCAVGCLRELRKLQRPTIMINYNPETVSTDYDMCDRLYFEEISFEVVMDIYEMENSEGIILSMGGQLPNNIAMDLHRQQAKVLGTSPESIDCAENRFKFSRMLDRKGILQPRWKELTNLQSAIEFCEEVGYPCLVRPSYVLSGAAMNVAYSNQDLETYLNAASEVSREHPVVISKFLTEAKEIDVDAVASDGRILCMAVSEHVENAGVHSGDATLVTPPQDLNAETLEAIKRITCDLASVLDVTGPFNMQLIAKNNELKVIECNVRVSRSFPFVSKTLDHDFVATATRAIVGLDVEPLDVLHGVGKVGVKVPQFSFSRLAGADVQLGVEMASTGEVACFGDNRYEAYLKAMMSTGFQIPKNAVLLSIGSFKHKMELLPSIRDLAKMGYKLYASMGTGDFYAEHGVNVESVQWTFDKTTPDDINGELRHLAEFLANKQFDLVINLPMSGGGARRVSSFMTHGYRTRRLAVDYSIPLVTDVKCTKLLVESMRMNGGKPPMKTHTDCMTSRRIVKLPGFIDVHVHLREPGATHKEDFASGTAAALAGGVTLVCAMPNTNPSIVDRETFTQFQELAKAGARCDYALYVGASDDNWAQVNELASHACGLKMYLNDTFGTLKLSDMTSWQRHLSHWPKRSPIVCHAERQSTAAVIMLAHLLDRSVHICHVARKEEIQLIRSAKEKGVKVTCEVCPHHLFLSTKDVERLGHGMSEVRPLLCSPEDQEALWENIDYIDVFATDHAPHTLAEKRSERPPPGFPGVETILPLLLQAVHEGRLTMEDIKRKFHRNPKIIFNLPDQAQTYVEVDLDEEWTITGNEMKSKSGWTPFEGTKVKGRVHRVVLRGEVAFVDGQVLVQPGFGQNVRPKQSPLASEASQDLLPSDNDANDTFTRLLTSEGPGGGVHGISTKVHFVDGANFLRPNSPSPRIRLDSASNTTLREYLQRTTNSNPVAHSLMGKHILAVDMFNKDHLNDIFNLAQLLKLRGTKDRPVDELLPGKIMASVFYEVSTRTQCSFAAAMLRLGGRVISMDNITSSVKKGESLEDSIKVVSSYADVVVLRHPSPGAVARAATFSRKPLINAGDGVGEHPTQALLDIFTIREEFGTVNGLTITMVGDLKNGRTVHSLARLLTLYNVNLQYVAPNSLQMPDEVVQFVHQRGVKQLFARDLKNVLPDTDVLYMTRIQRERFDNVEDYEKCCGHLVLTPEHMMRAKKRSIVLHPLPRLNEISREIDSDPRAAYFRQAEYGMYIRMALLAMVVGGRNTAL.

Residues 1 to 369 (MASTDCYLAL…PQDTEFLFDV (369 aa)) are GATase (Glutamine amidotransferase). 3 residues coordinate L-glutamine: S55, G240, and G242. In terms of domain architecture, Glutamine amidotransferase type-1 spans 195 to 380 (RIAILDCGLK…MESIQQKDLT (186 aa)). C269 acts as the Nucleophile; for GATase activity in catalysis. The L-glutamine site is built by L270, Q273, N311, G313, and Y314. Catalysis depends on for GATase activity residues H353 and E355. The tract at residues 370 to 415 (FMESIQQKDLTIPQLIEQRLRPTTPAIDSAPVMPRKVLILGSGGLS) is linker. Residues 416 to 1470 (IGQAGEFDYS…KPPMKTHTDC (1055 aa)) form a CPSase (Carbamoyl-phosphate synthase) region. 11 residues coordinate ATP: R525, R565, G571, G572, K602, E609, G635, I636, H637, Q678, and E692. ATP-grasp domains lie at 529–721 (AERV…KLAL) and 1066–1257 (SRML…RAIV). 3 residues coordinate Mg(2+): Q678, E692, and N694. Residues Q678, E692, and N694 each coordinate Mn(2+). The ATP site is built by R1102, K1141, L1143, E1148, G1173, V1174, H1175, S1176, Q1216, and E1228. Positions 1216, 1228, and 1230 each coordinate Mg(2+). 3 residues coordinate Mn(2+): Q1216, E1228, and N1230. Residues 1322–1477 (FQIPKNAVLL…TDCMTSRRIV (156 aa)) enclose the MGS-like domain. The tract at residues 1471-1484 (MTSRRIVKLPGFID) is linker. A DHOase (dihydroorotase) region spans residues 1485–1800 (VHVHLREPGA…GTKVKGRVHR (316 aa)). The Zn(2+) site is built by H1486 and H1488. (S)-dihydroorotate contacts are provided by R1490 and N1520. Residues K1571, H1605, C1628, H1629, and E1652 each coordinate Zn(2+). Position 1571 is an N6-carboxylysine (K1571). Residue R1676 participates in (S)-dihydroorotate binding. D1701 lines the Zn(2+) pocket. Residue D1701 is the For DHOase activity of the active site. Residues H1705 and P1717 each contribute to the (S)-dihydroorotate site. The linker stretch occupies residues 1801 to 1912 (VVLRGEVAFV…QRTTNSNPVA (112 aa)). Residues 1821–1843 (GQNVRPKQSPLASEASQDLLPSD) form a disordered region. 4 positions are modified to phosphoserine: S1883, S1885, S1892, and S1894. Residues 1913–2224 (HSLMGKHILA…MVVGGRNTAL (312 aa)) are ATCase (Aspartate transcarbamylase). Carbamoyl phosphate is bound by residues R1970 and T1971. K1998 contributes to the L-aspartate binding site. Carbamoyl phosphate is bound by residues R2019, H2047, and Q2050. L-aspartate contacts are provided by R2080 and R2141. L2180 and P2181 together coordinate carbamoyl phosphate.

The protein in the N-terminal section; belongs to the CarA family. It in the 2nd section; belongs to the CarB family. This sequence in the 3rd section; belongs to the metallo-dependent hydrolases superfamily. DHOase family. CAD subfamily. In the C-terminal section; belongs to the aspartate/ornithine carbamoyltransferase superfamily. ATCase family. Mg(2+) is required as a cofactor. Requires Mn(2+) as cofactor. The cofactor is Zn(2+).

It is found in the cytoplasm. It carries out the reaction hydrogencarbonate + L-glutamine + 2 ATP + H2O = carbamoyl phosphate + L-glutamate + 2 ADP + phosphate + 2 H(+). The catalysed reaction is L-glutamine + H2O = L-glutamate + NH4(+). It catalyses the reaction hydrogencarbonate + NH4(+) + 2 ATP = carbamoyl phosphate + 2 ADP + phosphate + 2 H(+). The enzyme catalyses carbamoyl phosphate + L-aspartate = N-carbamoyl-L-aspartate + phosphate + H(+). It carries out the reaction (S)-dihydroorotate + H2O = N-carbamoyl-L-aspartate + H(+). It functions in the pathway pyrimidine metabolism; UMP biosynthesis via de novo pathway; (S)-dihydroorotate from bicarbonate: step 1/3. It participates in pyrimidine metabolism; UMP biosynthesis via de novo pathway; (S)-dihydroorotate from bicarbonate: step 2/3. The protein operates within pyrimidine metabolism; UMP biosynthesis via de novo pathway; (S)-dihydroorotate from bicarbonate: step 3/3. Multifunctional protein that encodes the first 3 enzymatic activities of the de novo pyrimidine pathway: carbamoylphosphate synthetase (CPSase; EC 6.3.5.5), aspartate transcarbamylase (ATCase; EC 2.1.3.2) and dihydroorotase (DHOase; EC 3.5.2.3). The CPSase-function is accomplished in 2 steps, by a glutamine-dependent amidotransferase activity (GATase) that binds and cleaves glutamine to produce ammonia, followed by an ammonium-dependent carbamoyl phosphate synthetase, which reacts with the ammonia, hydrogencarbonate and ATP to form carbamoyl phosphate. The endogenously produced carbamoyl phosphate is sequestered and channeled to the ATCase active site. ATCase then catalyzes the formation of carbamoyl-L-aspartate from L-aspartate and carbamoyl phosphate. In the last step, DHOase catalyzes the cyclization of carbamoyl aspartate to dihydroorotate. The protein is Multifunctional protein r (r) of Drosophila melanogaster (Fruit fly).